A 423-amino-acid polypeptide reads, in one-letter code: Putative UPF0496 protein 5 (423 aa).

Over residues 1–14 (MGNRHGIMRPRRLA) the composition is skewed to basic residues. The segment at 1–37 (MGNRHGIMRPRRLASGRSAAEEEEDGEGEPGSYEAAC) is disordered. 2 helical membrane passes run 224 to 244 (IVFLTSFAALLVCSVVAAAIA) and 247 to 267 (PVAAALAAAASMPVGSAGKWM).

Belongs to the UPF0496 family.

It is found in the membrane. This chain is Putative UPF0496 protein 5, found in Oryza sativa subsp. japonica (Rice).